Reading from the N-terminus, the 558-residue chain is Ribonuclease J (558 aa).

Histidine 81, histidine 83, aspartate 85, histidine 86, histidine 148, and aspartate 170 together coordinate Zn(2+). Residue 371 to 375 (HVSGH) participates in substrate binding. A Zn(2+)-binding site is contributed by histidine 397.

It belongs to the metallo-beta-lactamase superfamily. RNA-metabolizing metallo-beta-lactamase-like family. Bacterial RNase J subfamily. Homodimer. The cofactor is Zn(2+).

The protein resides in the cytoplasm. Its function is as follows. An RNase that has endonuclease and 5'-3' exonuclease activity. The 5'-exonuclease activity acts on 5'-monophosphate but not 5'-triphosphate ends. Endonuclease activity can cleave within 4 nucleotides of the 5'-end of a triphosphorylated RNA. Plays the major role in pre-23S rRNA maturation, and a minor role in processing of pre-5S and pre-16S rRNA. The polypeptide is Ribonuclease J (Mycolicibacterium smegmatis (strain ATCC 700084 / mc(2)155) (Mycobacterium smegmatis)).